The chain runs to 404 residues: Epoxide hydrolase 1 (404 aa).

The chain crosses the membrane as a helical span at residues 74–96 (ILVRLLQFYYFVKFSAILFLGFA). In terms of domain architecture, AB hydrolase-1 spans 140–389 (PLMLFIHGYP…ASHWVQQDEP (250 aa)). Asp215 acts as the Nucleophile in catalysis. The active-site Proton donor is Tyr327. Residue His382 is the Proton acceptor of the active site.

Belongs to the AB hydrolase superfamily. Epoxide hydrolase family.

The protein resides in the membrane. It carries out the reaction an epoxide + H2O = an ethanediol. The enzyme catalyses 8,9-epoxy-(5Z,11Z,14Z)-eicosatrienoate + H2O = 8,9-dihydroxy-(5Z,11Z,14Z)-eicosatrienoate. The catalysed reaction is 11,12-epoxy-(5Z,8Z,14Z)-eicosatrienoate + H2O = 11,12-dihydroxy-(5Z,8Z,14Z)-eicosatrienoate. It catalyses the reaction 14,15-epoxy-(5Z,8Z,11Z)-eicosatrienoate + H2O = 14,15-dihydroxy-(5Z,8Z,11Z)-eicosatrienoate. It carries out the reaction 12,13-epoxy-(9Z)-octadecenoate + H2O = 12,13-dihydroxy-(9Z)-octadecenoate. The enzyme catalyses 9,10-epoxy-(12Z)-octadecenoate + H2O = 9,10-dihydroxy-(12Z)-octadecenoate. It functions in the pathway lipid metabolism. Catalyzes the hydrolysis of epoxide-containing fatty acids. Active against epoxyeicosatrienoic acids (EETs) including 8,9-epoxy-(5Z,11Z,14Z)-eicosatrienoate (8,9-EET), 11,12-epoxy-(5Z,8Z,14Z)-eicosatrienoate (11,12-EET) and 14,15-epoxy-(5Z,8Z,11Z)-eicosatrienoate (14,15-EET) and the linoleic acid metabolites 12,13-epoxy-(9Z)-octadecenoate (12,13-EpOME) and 9,10-epoxy-(12Z)-octadecenoate (9,10-EpOME). These epoxides function as lipid signaling molecules, the enzyme can deplete the supply of the epoxide signal by transforming them into diol species that are more readily eliminated through excretion. This Caenorhabditis elegans protein is Epoxide hydrolase 1.